We begin with the raw amino-acid sequence, 257 residues long: Imidazole glycerol phosphate synthase subunit HisF (257 aa).

Catalysis depends on residues aspartate 11 and aspartate 130.

Belongs to the HisA/HisF family. In terms of assembly, heterodimer of HisH and HisF.

It is found in the cytoplasm. It carries out the reaction 5-[(5-phospho-1-deoxy-D-ribulos-1-ylimino)methylamino]-1-(5-phospho-beta-D-ribosyl)imidazole-4-carboxamide + L-glutamine = D-erythro-1-(imidazol-4-yl)glycerol 3-phosphate + 5-amino-1-(5-phospho-beta-D-ribosyl)imidazole-4-carboxamide + L-glutamate + H(+). It participates in amino-acid biosynthesis; L-histidine biosynthesis; L-histidine from 5-phospho-alpha-D-ribose 1-diphosphate: step 5/9. In terms of biological role, IGPS catalyzes the conversion of PRFAR and glutamine to IGP, AICAR and glutamate. The HisF subunit catalyzes the cyclization activity that produces IGP and AICAR from PRFAR using the ammonia provided by the HisH subunit. This chain is Imidazole glycerol phosphate synthase subunit HisF, found in Prochlorococcus marinus (strain SARG / CCMP1375 / SS120).